We begin with the raw amino-acid sequence, 222 residues long: Probable pyridoxal 5'-phosphate synthase subunit SNO3 (222 aa).

An L-glutamine-binding site is contributed by 58 to 60; it reads GES. C91 serves as the catalytic Nucleophile. Residues R120 and 151–152 each bind L-glutamine; that span reads IR. Catalysis depends on charge relay system residues H197 and E199.

This sequence belongs to the glutaminase PdxT/SNO family.

The catalysed reaction is aldehydo-D-ribose 5-phosphate + D-glyceraldehyde 3-phosphate + L-glutamine = pyridoxal 5'-phosphate + L-glutamate + phosphate + 3 H2O + H(+). It catalyses the reaction L-glutamine + H2O = L-glutamate + NH4(+). It participates in cofactor biosynthesis; pyridoxal 5'-phosphate biosynthesis. Catalyzes the hydrolysis of glutamine to glutamate and ammonia as part of the biosynthesis of pyridoxal 5'-phosphate. The resulting ammonia molecule is channeled to the active site of a SNZ isoform. The protein is Probable pyridoxal 5'-phosphate synthase subunit SNO3 (SNO3) of Saccharomyces cerevisiae (strain ATCC 204508 / S288c) (Baker's yeast).